The following is a 451-amino-acid chain: 2-succinylbenzoate--CoA ligase (451 aa).

The protein belongs to the ATP-dependent AMP-binding enzyme family. MenE subfamily.

It catalyses the reaction 2-succinylbenzoate + ATP + CoA = 2-succinylbenzoyl-CoA + AMP + diphosphate. It participates in quinol/quinone metabolism; 1,4-dihydroxy-2-naphthoate biosynthesis; 1,4-dihydroxy-2-naphthoate from chorismate: step 5/7. Its pathway is quinol/quinone metabolism; menaquinone biosynthesis. Functionally, converts 2-succinylbenzoate (OSB) to 2-succinylbenzoyl-CoA (OSB-CoA). This Escherichia coli (strain K12) protein is 2-succinylbenzoate--CoA ligase.